Here is a 331-residue protein sequence, read N- to C-terminus: GTP 3',8-cyclase 2 (331 aa).

One can recognise a Radical SAM core domain in the interval 9-234; it reads PFGRRITYLR…PSLARSGGPS (226 aa). Arginine 18 contacts GTP. Residues cysteine 25 and cysteine 29 each coordinate [4Fe-4S] cluster. Tyrosine 31 provides a ligand contact to S-adenosyl-L-methionine. [4Fe-4S] cluster is bound at residue cysteine 32. Arginine 67 is a GTP binding site. Glycine 71 lines the S-adenosyl-L-methionine pocket. GTP is bound at residue threonine 98. Serine 122 provides a ligand contact to S-adenosyl-L-methionine. Residue lysine 159 coordinates GTP. An S-adenosyl-L-methionine-binding site is contributed by methionine 193. The [4Fe-4S] cluster site is built by cysteine 257 and cysteine 260. 262-264 is a binding site for GTP; sequence RVR. Cysteine 274 lines the [4Fe-4S] cluster pocket.

The protein belongs to the radical SAM superfamily. MoaA family. As to quaternary structure, monomer and homodimer. [4Fe-4S] cluster is required as a cofactor.

The catalysed reaction is GTP + AH2 + S-adenosyl-L-methionine = (8S)-3',8-cyclo-7,8-dihydroguanosine 5'-triphosphate + 5'-deoxyadenosine + L-methionine + A + H(+). The protein operates within cofactor biosynthesis; molybdopterin biosynthesis. In terms of biological role, catalyzes the cyclization of GTP to (8S)-3',8-cyclo-7,8-dihydroguanosine 5'-triphosphate. The chain is GTP 3',8-cyclase 2 (moaA2) from Pseudomonas aeruginosa (strain ATCC 15692 / DSM 22644 / CIP 104116 / JCM 14847 / LMG 12228 / 1C / PRS 101 / PAO1).